Here is a 251-residue protein sequence, read N- to C-terminus: Plant UBX domain-containing protein 1 (251 aa).

M1 is subject to N-acetylmethionine. A UBX domain is found at 104–180; sequence SKLTKAVIRV…GFVPGAIVYF (77 aa). Residues 212–251 are disordered; that stretch reads AVEPVESSSEPATVDSSAVPVEHERKSTEKKTTKPKWFKM. Polar residues predominate over residues 217-227; it reads ESSSEPATVDS. Residues 232–243 show a composition bias toward basic and acidic residues; it reads VEHERKSTEKKT.

In terms of assembly, interacts with CDC48A (non-hexameric) via its UBX-containing C-terminal domain.

The protein localises to the cytoplasm. Its function is as follows. Regulates CDC48A by inhibiting its ATPase activity and by promoting the disassembly of the active hexamer. The polypeptide is Plant UBX domain-containing protein 1 (Arabidopsis thaliana (Mouse-ear cress)).